A 132-amino-acid polypeptide reads, in one-letter code: MRHGHGLRKLNRTSEHRLAMLRNMMNSLLQHEVIKTTLPKAKELRRVVEPMITLAKEPTVANKRLAFDRLRDRDMVVKLFAELGPRYKARPGGYTRILKMGFRVGDNAPMALVELVDRPEIEDTTADAAKAE.

The protein belongs to the bacterial ribosomal protein bL17 family. In terms of assembly, part of the 50S ribosomal subunit. Contacts protein L32.

The chain is Large ribosomal subunit protein bL17 from Polaromonas sp. (strain JS666 / ATCC BAA-500).